Reading from the N-terminus, the 233-residue chain is ATP synthase subunit a (233 aa).

A run of 7 helical transmembrane segments spans residues 29 to 49 (FKHV…SFIV), 60 to 80 (LQNI…SITG), 89 to 109 (VLIV…VPGF), 115 to 135 (NINT…YIGI), 143 to 163 (IKHF…LELI), 185 to 205 (FVLI…IYFL), and 206 to 226 (FTLA…IYLK).

It belongs to the ATPase A chain family. As to quaternary structure, F-type ATPases have 2 components, CF(1) - the catalytic core - and CF(0) - the membrane proton channel. CF(1) has five subunits: alpha(3), beta(3), gamma(1), delta(1), epsilon(1). CF(0) has three main subunits: a(1), b(2) and c(9-12). The alpha and beta chains form an alternating ring which encloses part of the gamma chain. CF(1) is attached to CF(0) by a central stalk formed by the gamma and epsilon chains, while a peripheral stalk is formed by the delta and b chains.

Its subcellular location is the cell inner membrane. Key component of the proton channel; it plays a direct role in the translocation of protons across the membrane. The polypeptide is ATP synthase subunit a (Oleidesulfovibrio alaskensis (strain ATCC BAA-1058 / DSM 17464 / G20) (Desulfovibrio alaskensis)).